The chain runs to 63 residues: Frenatin 1.1 (63 aa).

The signal sequence occupies residues 1 to 22 (MAFLKKSLFLVLFLGLVSLSIC). A propeptide spanning residues 23–49 (EKEKKEQEDEDENEEEKESEEGSEEKR) is cleaved from the precursor. Residues 25-63 (EKKEQEDEDENEEEKESEEGSEEKRGLLDTLGGILGLGR) are disordered. Positions 30–45 (EDEDENEEEKESEEGS) are enriched in acidic residues. Leucine 61 bears the Leucine amide mark.

In terms of tissue distribution, expressed by the skin glands.

Its subcellular location is the secreted. In terms of biological role, antimicrobial peptide with selective activity. Is only active against Micrococcus luteus (MIC=25 ug/ml) and not against Bacillus cereus, Escherichia coli, Leuconostoc mesenteroides, Micrococcus luteus, Pastewella haemolytica, Staphylococcus aureus, Streptococcus faecalis and Streptococcus uberis. The chain is Frenatin 1.1 from Nyctimystes infrafrenatus (White-lipped tree frog).